The following is a 76-amino-acid chain: MGSFSIWHWLVVLAIVVLVFGTKKLRNLGSDLGGAVRGFKEGMKGAEEESTPPPPAQQVTGHSIKSEIEEKDQTKV.

A helical membrane pass occupies residues 1 to 21 (MGSFSIWHWLVVLAIVVLVFG). The segment at 41 to 76 (EGMKGAEEESTPPPPAQQVTGHSIKSEIEEKDQTKV) is disordered. Residues 64–76 (IKSEIEEKDQTKV) show a composition bias toward basic and acidic residues.

It belongs to the TatA/E family. As to quaternary structure, the Tat system comprises two distinct complexes: a TatABC complex, containing multiple copies of TatA, TatB and TatC subunits, and a separate TatA complex, containing only TatA subunits. Substrates initially bind to the TatABC complex, which probably triggers association of the separate TatA complex to form the active translocon.

The protein localises to the cell inner membrane. Part of the twin-arginine translocation (Tat) system that transports large folded proteins containing a characteristic twin-arginine motif in their signal peptide across membranes. TatA could form the protein-conducting channel of the Tat system. The polypeptide is Sec-independent protein translocase protein TatA (Nitrosomonas europaea (strain ATCC 19718 / CIP 103999 / KCTC 2705 / NBRC 14298)).